Reading from the N-terminus, the 151-residue chain is uncharacterized protein (151 aa).

A signal peptide spans 1–32 (MEEAEKAKRRSIELLNETRNCAYSSFVALAEA). Residues 45–67 (AIGFAGGISGSGHICGALWGSIA) form a helical membrane-spanning segment.

The protein localises to the membrane. This is an uncharacterized protein from Archaeoglobus fulgidus (strain ATCC 49558 / DSM 4304 / JCM 9628 / NBRC 100126 / VC-16).